The following is a 454-amino-acid chain: Laccase-3 (454 aa).

2 consecutive Plastocyanin-like domains span residues 1–95 (PGPT…GPAT) and 101–252 (DLGV…YSGA). Asn-24 carries an N-linked (GlcNAc...) asparagine glycan. Residues His-29, His-31, His-73, and His-75 each contribute to the Cu cation site. N-linked (GlcNAc...) asparagine glycosylation is found at Asn-138, Asn-169, Asn-218, Asn-314, and Asn-334. One can recognise a Plastocyanin-like 3 domain in the interval 319–454 (DVDWKKPILQ…SEGLAVQFQG (136 aa)). Cu cation-binding residues include His-375, His-378, and His-380. A glycan (N-linked (GlcNAc...) asparagine) is linked at Asn-395. His-437, Cys-438, His-439, and His-443 together coordinate Cu cation.

It belongs to the multicopper oxidase family. Requires Cu cation as cofactor.

It localises to the secreted. The enzyme catalyses 4 hydroquinone + O2 = 4 benzosemiquinone + 2 H2O. Lignin degradation and detoxification of lignin-derived products. This chain is Laccase-3 (lcc3), found in Botryotinia fuckeliana (Noble rot fungus).